The following is a 334-amino-acid chain: Probable fructose-bisphosphate aldolase class 1 (334 aa).

It belongs to the class I fructose-bisphosphate aldolase family.

It carries out the reaction beta-D-fructose 1,6-bisphosphate = D-glyceraldehyde 3-phosphate + dihydroxyacetone phosphate. Its pathway is carbohydrate degradation; glycolysis; D-glyceraldehyde 3-phosphate and glycerone phosphate from D-glucose: step 4/4. This is Probable fructose-bisphosphate aldolase class 1 from Xylella fastidiosa (strain Temecula1 / ATCC 700964).